The chain runs to 284 residues: MPRYAQLVMGPAGSGKSTYCATMVQHCEALNRSVQVVNLDPAAEHFNYSVMADIRELIEVDDVMEDSTLQFGPNGGLVFCMEYFANNFDWLENCLGHVEDDYILFDCPGQIELYTHLPVMKQLVQQLEQWEFRVCGVFLVDSQFMVESFKFISGILAALSAMISLEIPQVNVMTKMDLLSKKAKKEIEKFLDPDMYSLLDDSTSDLRSKKFKKLTNAICGLIDDYSMVRFLPYDQSDEESMNIVLQHIDFAIQYGEDLEFKEPKEHEDESSSMFDEYFQEHQNE.

Glycine 13–threonine 18 is a GTP binding site. The Gly-Pro-Asn (GPN)-loop; involved in dimer interface motif lies at glycine 72–asparagine 74. Threonine 174–aspartate 177 is a GTP binding site. Positions lysine 261–glutamate 284 are disordered.

This sequence belongs to the GPN-loop GTPase family. In terms of assembly, heterodimer with GPN1. Binds to RNA polymerase II (RNAPII). Interacts directly with subunits RPB4 and RPB7 and the CTD of RPB1.

In terms of biological role, small GTPase required for proper localization of RNA polymerase II (RNAPII). May act at an RNAP assembly step prior to nuclear import. This Bos taurus (Bovine) protein is GPN-loop GTPase 3.